A 306-amino-acid chain; its full sequence is Ribosomal protein L11 methyltransferase (306 aa).

Residues T154, G179, D201, and N242 each coordinate S-adenosyl-L-methionine.

Belongs to the methyltransferase superfamily. PrmA family.

The protein resides in the cytoplasm. The enzyme catalyses L-lysyl-[protein] + 3 S-adenosyl-L-methionine = N(6),N(6),N(6)-trimethyl-L-lysyl-[protein] + 3 S-adenosyl-L-homocysteine + 3 H(+). Functionally, methylates ribosomal protein L11. In Stenotrophomonas maltophilia (strain K279a), this protein is Ribosomal protein L11 methyltransferase.